The sequence spans 789 residues: Endonuclease MutS2 (789 aa).

334-341 (GPNTGGKT) provides a ligand contact to ATP. The disordered stretch occupies residues 690-714 (PEKDIQQSGTGKIMKSKTGDTKSEV). The region spanning 714 to 789 (VDVRGKNLEE…GMGVTIVELK (76 aa)) is the Smr domain.

It belongs to the DNA mismatch repair MutS family. MutS2 subfamily. In terms of assembly, homodimer. Binds to stalled ribosomes, contacting rRNA.

Its function is as follows. Endonuclease that is involved in the suppression of homologous recombination and thus may have a key role in the control of bacterial genetic diversity. In terms of biological role, acts as a ribosome collision sensor, splitting the ribosome into its 2 subunits. Detects stalled/collided 70S ribosomes which it binds and splits by an ATP-hydrolysis driven conformational change. Acts upstream of the ribosome quality control system (RQC), a ribosome-associated complex that mediates the extraction of incompletely synthesized nascent chains from stalled ribosomes and their subsequent degradation. Probably generates substrates for RQC. In Alkaliphilus metalliredigens (strain QYMF), this protein is Endonuclease MutS2.